We begin with the raw amino-acid sequence, 1041 residues long: Serine-repeat antigen protein 6 (1041 aa).

Positions 1–34 are cleaved as a signal peptide; the sequence is MIFFNFKLNRMICPIFFLYIINVLFTQYFIKCEG. The N-linked (GlcNAc...) asparagine glycan is linked to Asn84. Positions 101–111 are enriched in low complexity; it reads KVVSSSESGKG. The tract at residues 101–173 is disordered; sequence KVVSSSESGK…TESSSETLNK (73 aa). Residues 114-149 show a composition bias toward polar residues; it reads VSHTKVTSEGLSDTQPNVTQSVSSSTHTPGSLDSTM. N-linked (GlcNAc...) asparagine glycosylation occurs at Asn130. Residues 150–168 are compositionally biased toward low complexity; that stretch reads STEQHSSVSQSSLPTESSS. Residue Asn459 is glycosylated (N-linked (GlcNAc...) asparagine). The tract at residues 500–577 is disordered; sequence TLPSESPSES…GDTNYVYDFD (78 aa). The segment covering 502–515 has biased composition (low complexity); the sequence is PSESPSESSSKSDS. Residues 521 to 545 are compositionally biased toward basic and acidic residues; the sequence is NDKDKNEDKDDMSKNSKEEFKNDDK. N-linked (GlcNAc...) asparagine glycosylation is present at Asn554. Over residues 564-574 the composition is skewed to low complexity; that stretch reads NINNGDTNYVY. N-linked (GlcNAc...) asparagine glycosylation occurs at Asn583. Cys654 is an active-site residue. Asn684 carries an N-linked (GlcNAc...) asparagine glycan. Catalysis depends on residues His820 and Asn845. An N-linked (GlcNAc...) asparagine glycan is attached at Asn984.

It belongs to the peptidase C1 family. In terms of processing, just prior to merozoite egress from host erythrocytes, proteolytically cleaved by SUB1 to generate the active 75kDa form.

It is found in the parasitophorous vacuole lumen. It localises to the parasitophorous vacuole membrane. Its function is as follows. Cysteine protease which plays an essential role in merozoite egress from host erythrocytes. May cleave host SPTB/beta spectrin and ANK1/ankyrin-1 which disrupts host erythrocyte actin cytoskeleton and leads to host erythrocyte cell membrane rupture. This is Serine-repeat antigen protein 6 from Plasmodium falciparum.